We begin with the raw amino-acid sequence, 380 residues long: Tomoregulin-1 (380 aa).

The first 39 residues, 1-39, serve as a signal peptide directing secretion; that stretch reads MGAAAAEAPLRLPAAPPLAFCCYTSVLLLFAFSLPGSRA. Over 40 to 330 the chain is Extracellular; it reads SNQPPGGGGG…VPSRQKLTHV (291 aa). Kazal-like domains are found at residues 98–145 and 189–237; these read ACQF…PCYS and VCNI…HCTD. 9 cysteine pairs are disulfide-bonded: cysteine 99–cysteine 129, cysteine 103–cysteine 122, cysteine 111–cysteine 143, cysteine 190–cysteine 221, cysteine 194–cysteine 214, cysteine 203–cysteine 235, cysteine 275–cysteine 288, cysteine 283–cysteine 299, and cysteine 301–cysteine 310. The EGF-like domain maps to 271 to 311; that stretch reads NHMPCPENLNGYCIHGKCEFIYSTQKASCRCESGYTGQHCE. The helical transmembrane segment at 331-351 threads the bilayer; it reads LIAAIIGAVQIAIIVAIVMCI. Residues 352–380 are Cytoplasmic-facing; the sequence is TRKCPKNNRGRRQKQNLGHFTSDTSSRMV. Residues 359-380 form a disordered region; that stretch reads NRGRRQKQNLGHFTSDTSSRMV. The span at 366–380 shows a compositional bias: polar residues; the sequence is QNLGHFTSDTSSRMV.

Belongs to the tomoregulin family. In terms of assembly, may interact with ST14. Expressed predominantly in brain, and at lower levels in heart, placenta and skeletal muscle. Down-regulated in brain tumors as compared to control brain tissues.

The protein localises to the cell membrane. Functionally, neuron-specific restriction factor that prevents herpes simplex virus 1 (HHV-1) infection in the brain by blocking viral entry. Also able to restrict herpes simplex virus 2 (HHV-2) infection, although to a lesser extent. Acts by preventing the association between the viral glycoprotein D (gD) and its cell surface receptor NECTIN1, thereby inhibiting fusion of the virus and the cell membrane. Also able to prevent the association between the viral glycoprotein B (gB) and MYH9/NMMHC-IIA and MYH10/NMMHC-IIB receptors. May be a tumor suppressor in brain cancers. The chain is Tomoregulin-1 from Homo sapiens (Human).